Consider the following 192-residue polypeptide: Lipid A acyltransferase PagP (192 aa).

Positions 1–26 (MTVVNKSFLTILIFFCQILFPLNASA) are cleaved as a signal peptide. Catalysis depends on residues histidine 64, aspartate 107, and serine 108.

It belongs to the lipid A palmitoyltransferase family. In terms of assembly, homodimer.

It is found in the cell outer membrane. It catalyses the reaction a lipid A + a 1,2-diacyl-sn-glycero-3-phosphocholine = a hepta-acyl lipid A + a 2-acyl-sn-glycero-3-phosphocholine. It carries out the reaction a lipid IVA + a 1,2-diacyl-sn-glycero-3-phosphocholine = a lipid IVB + a 2-acyl-sn-glycero-3-phosphocholine. The catalysed reaction is a lipid IIA + a 1,2-diacyl-sn-glycero-3-phosphocholine = a lipid IIB + a 2-acyl-sn-glycero-3-phosphocholine. Functionally, transfers a fatty acid residue from the sn-1 position of a phospholipid to the N-linked hydroxyfatty acid chain on the proximal unit of lipid A or its precursors. The chain is Lipid A acyltransferase PagP from Cronobacter sakazakii (strain ATCC BAA-894) (Enterobacter sakazakii).